Here is an 872-residue protein sequence, read N- to C-terminus: Bifunctional uridylyltransferase/uridylyl-removing enzyme (872 aa).

A uridylyltransferase region spans residues 1-332 (MALPNKVKKL…PKHHQPIIQE (332 aa)). A uridylyl-removing region spans residues 333–691 (LDRNFERIGN…VSNKAMHGGT (359 aa)). Residues 450 to 572 (VDEHTHRLIN…VKTERQLDYL (123 aa)) enclose the HD domain. 2 ACT domains span residues 692–773 (QVFV…FKKN) and 799–872 (LIEI…AETE).

Belongs to the GlnD family. The cofactor is Mg(2+).

The catalysed reaction is [protein-PII]-L-tyrosine + UTP = [protein-PII]-uridylyl-L-tyrosine + diphosphate. It carries out the reaction [protein-PII]-uridylyl-L-tyrosine + H2O = [protein-PII]-L-tyrosine + UMP + H(+). Its activity is regulated as follows. Uridylyltransferase (UTase) activity is inhibited by glutamine, while glutamine activates uridylyl-removing (UR) activity. In terms of biological role, modifies, by uridylylation and deuridylylation, the PII regulatory proteins (GlnB and homologs), in response to the nitrogen status of the cell that GlnD senses through the glutamine level. Under low glutamine levels, catalyzes the conversion of the PII proteins and UTP to PII-UMP and PPi, while under higher glutamine levels, GlnD hydrolyzes PII-UMP to PII and UMP (deuridylylation). Thus, controls uridylylation state and activity of the PII proteins, and plays an important role in the regulation of nitrogen assimilation and metabolism. This is Bifunctional uridylyltransferase/uridylyl-removing enzyme from Pseudoalteromonas translucida (strain TAC 125).